Reading from the N-terminus, the 688-residue chain is G protein-coupled receptor kinase 3 (688 aa).

The interval Met-1–Asp-190 is N-terminal. The RGS domain maps to Thr-54–Cys-175. The region spanning Phe-191 to Phe-453 is the Protein kinase domain. Residues Ile-197–Val-205 and Lys-220 contribute to the ATP site. The Proton acceptor role is filled by Asp-317. The 68-residue stretch at Arg-454–Val-521 folds into the AGC-kinase C-terminal domain. The PH domain maps to Asp-558 to Met-652.

Belongs to the protein kinase superfamily. AGC Ser/Thr protein kinase family. GPRK subfamily. In terms of assembly, interacts with GIT1. Post-translationally, ubiquitinated. As to expression, ubiquitous; brain, spleen &gt; heart, lung &gt; kidney.

It is found in the postsynapse. It localises to the presynapse. The catalysed reaction is [beta-adrenergic receptor] + ATP = [beta-adrenergic receptor]-phosphate + ADP + H(+). Its function is as follows. Specifically phosphorylates the agonist-occupied form of the beta-adrenergic and closely related receptors. This Bos taurus (Bovine) protein is G protein-coupled receptor kinase 3.